The chain runs to 150 residues: MIKTLIIIIVSVIVGYLISHFNILNFVISSLIEVTVINNKKVIVGAIVGQALIYFFVFFLPLSSVANQIVKEESSTNYRVNPPKTPSLVGNLYLQQQLQQQQQQQQQLQQQQQQQQQSHHQPILNTATPFTLQNHLIPNPSIKTTQYNIK.

The next 2 membrane-spanning stretches (helical) occupy residues 4 to 24 and 42 to 62; these read TLIIIIVSVIVGYLISHFNIL and VIVGAIVGQALIYFFVFFLPL.

It is found in the membrane. The polypeptide is Putative transmembrane protein DDB_G0277665 (Dictyostelium discoideum (Social amoeba)).